Consider the following 204-residue polypeptide: Guanylate kinase (204 aa).

A Guanylate kinase-like domain is found at 5-184; that stretch reads GLLLVLSGPS…AVNHIKAIVD (180 aa). 12–19 provides a ligand contact to ATP; it reads GPSGVGKG.

Belongs to the guanylate kinase family.

The protein resides in the cytoplasm. The enzyme catalyses GMP + ATP = GDP + ADP. In terms of biological role, essential for recycling GMP and indirectly, cGMP. The polypeptide is Guanylate kinase (Lactobacillus delbrueckii subsp. bulgaricus (strain ATCC 11842 / DSM 20081 / BCRC 10696 / JCM 1002 / NBRC 13953 / NCIMB 11778 / NCTC 12712 / WDCM 00102 / Lb 14)).